The following is a 561-amino-acid chain: V-type proton ATPase catalytic subunit A (561 aa).

ATP is bound at residue 190–197; it reads GAFGCGKT.

This sequence belongs to the ATPase alpha/beta chains family. V-ATPase is a heteromultimeric enzyme composed of a peripheral catalytic V1 complex (main components: subunits A, B, C, D, E, and F) attached to an integral membrane V0 proton pore complex (main component: the proteolipid protein). In terms of tissue distribution, high expression in the mesocotyl tip of etiolated seedlings compared to the base.

The enzyme catalyses ATP + H2O + 4 H(+)(in) = ADP + phosphate + 5 H(+)(out). Functionally, catalytic subunit of the peripheral V1 complex of vacuolar ATPase. V-ATPase vacuolar ATPase is responsible for acidifying a variety of intracellular compartments in eukaryotic cells. This Zea mays (Maize) protein is V-type proton ATPase catalytic subunit A.